A 494-amino-acid chain; its full sequence is Gabija protein GajB (494 aa).

In terms of domain architecture, UvrD-like helicase ATP-binding spans 1 to 229 (MSREQIIKDG…YHLTSNFRCC (229 aa)). An ATP-binding site is contributed by 17–24 (AGAGSGKT).

The protein belongs to the helicase family. In terms of assembly, homodimer. Interacts with GajA; 2 GajB dimers dock at opposite sides of the GajA complex to form a 4:4 GajA-GajB assembly (GajAB). GajAB interacts with Bacillus phage Phi3T Gad1 protein; this interaction forms a 4:4:8 GajAB-Gad1 complex and leads to GajAB inhibition.

Its function is as follows. Component of antiviral defense system Gabija type I, composed of GajA and GajB. Expression of Gabija type I in B.subtilis (strain BEST7003) confers resistance to phages phi105, phi29, rho14, SpBeta and SBSphiC. Expression of Gabija type I in E.coli B (strain ATCC 11303) confers resistance to phage T7. May be a helicase or contribute to GajA activation. The polypeptide is Gabija protein GajB (Bacillus cereus (strain VD045)).